We begin with the raw amino-acid sequence, 316 residues long: Apolipoprotein E (316 aa).

A signal peptide spans 1–18; sequence MKALWAVLVVTLLAGCLA. A run of 8 repeats spans residues 76–97, 98–119, 120–141, 142–163, 164–185, 186–207, 208–229, and 230–251. Residues 76 to 251 form an 8 X 22 AA approximate tandem repeats region; the sequence is VLMEDTMTEL…RLEEVREQME (176 aa). M139 bears the Methionine sulfoxide mark. Position 143 is a phosphoserine (S143). Positions 154–164 are LDL and other lipoprotein receptors binding; that stretch reads HLRKLRKRLMR. 158–161 contacts heparin; it reads LRKR. The interval 206–286 is lipid-binding and lipoprotein association; it reads TANLGAGAGK…GWFEPLVEDM (81 aa). 225 to 232 provides a ligand contact to heparin; the sequence is GARIRGRL. Residues 262-316 are homooligomerization; sequence QQMRLQAEIFQARLKGWFEPLVEDMQRQWANLVEKIQASVAANPIPPSSVPQESQ. The interval 274–286 is specificity for association with VLDL; the sequence is RLKGWFEPLVEDM.

This sequence belongs to the apolipoprotein A1/A4/E family. In terms of assembly, homotetramer. May interact with ABCA1; functionally associated with ABCA1 in the biogenesis of HDLs. May interact with APP/A4 amyloid-beta peptide; the interaction is extremely stable in vitro but its physiological significance is unclear. May interact with MAPT. May interact with MAP2. In the cerebrospinal fluid, interacts with secreted SORL1. Interacts with PMEL; this allows the loading of PMEL luminal fragment on ILVs to induce fibril nucleation. In terms of processing, APOE exists as multiple glycosylated and sialylated glycoforms within cells and in plasma. The extent of glycosylation and sialylation are tissue and context specific. Glycated in plasma VLDL. Post-translationally, phosphorylated by FAM20C in the extracellular medium.

The protein localises to the secreted. It localises to the extracellular space. Its subcellular location is the extracellular matrix. It is found in the extracellular vesicle. The protein resides in the endosome. The protein localises to the multivesicular body. Functionally, APOE is an apolipoprotein, a protein associating with lipid particles, that mainly functions in lipoprotein-mediated lipid transport between organs via the plasma and interstitial fluids. APOE is a core component of plasma lipoproteins and is involved in their production, conversion and clearance. Apolipoproteins are amphipathic molecules that interact both with lipids of the lipoprotein particle core and the aqueous environment of the plasma. As such, APOE associates with chylomicrons, chylomicron remnants, very low density lipoproteins (VLDL) and intermediate density lipoproteins (IDL) but shows a preferential binding to high-density lipoproteins (HDL). It also binds a wide range of cellular receptors including the LDL receptor/LDLR, the LDL receptor-related proteins LRP1, LRP2 and LRP8 and the very low-density lipoprotein receptor/VLDLR that mediate the cellular uptake of the APOE-containing lipoprotein particles. Finally, APOE also has a heparin-binding activity and binds heparan-sulfate proteoglycans on the surface of cells, a property that supports the capture and the receptor-mediated uptake of APOE-containing lipoproteins by cells. A main function of APOE is to mediate lipoprotein clearance through the uptake of chylomicrons, VLDLs, and HDLs by hepatocytes. APOE is also involved in the biosynthesis by the liver of VLDLs as well as their uptake by peripheral tissues ensuring the delivery of triglycerides and energy storage in muscle, heart and adipose tissues. By participating in the lipoprotein-mediated distribution of lipids among tissues, APOE plays a critical role in plasma and tissues lipid homeostasis. APOE is also involved in two steps of reverse cholesterol transport, the HDLs-mediated transport of cholesterol from peripheral tissues to the liver, and thereby plays an important role in cholesterol homeostasis. First, it is functionally associated with ABCA1 in the biogenesis of HDLs in tissues. Second, it is enriched in circulating HDLs and mediates their uptake by hepatocytes. APOE also plays an important role in lipid transport in the central nervous system, regulating neuron survival and sprouting. The sequence is that of Apolipoprotein E (Apoe) from Onychomys torridus (Southern grasshopper mouse).